We begin with the raw amino-acid sequence, 178 residues long: Endoribonuclease YbeY (178 aa).

Positions 118, 122, and 128 each coordinate Zn(2+). Residues 156–178 (YQQDRQDERDRRLLDKSRYFDEP) form a disordered region. Residues 159–178 (DRQDERDRRLLDKSRYFDEP) are compositionally biased toward basic and acidic residues.

It belongs to the endoribonuclease YbeY family. The cofactor is Zn(2+).

The protein resides in the cytoplasm. Its function is as follows. Single strand-specific metallo-endoribonuclease involved in late-stage 70S ribosome quality control and in maturation of the 3' terminus of the 16S rRNA. This chain is Endoribonuclease YbeY, found in Mycobacterium marinum (strain ATCC BAA-535 / M).